A 135-amino-acid polypeptide reads, in one-letter code: Protein KRTCAP2 homolog (135 aa).

The next 4 membrane-spanning stretches (helical) occupy residues 1-21, 35-55, 69-89, and 93-113; these read MAVS…LLFA, PMAI…LTAI, TKLI…SGMV, and CITT…RISI.

It belongs to the KRTCAP2 family. In terms of assembly, component of the oligosaccharyltransferase (OST) complex.

It localises to the membrane. Its function is as follows. Subunit of the oligosaccharyl transferase (OST) complex that catalyzes the initial transfer of a defined glycan (Glc(3)Man(9)GlcNAc(2) in eukaryotes) from the lipid carrier dolichol-pyrophosphate to an asparagine residue within an Asn-X-Ser/Thr consensus motif in nascent polypeptide chains, the first step in protein N-glycosylation. N-glycosylation occurs cotranslationally and the complex associates with the Sec61 complex at the channel-forming translocon complex that mediates protein translocation across the endoplasmic reticulum (ER). All subunits are required for a maximal enzyme activity. This is Protein KRTCAP2 homolog from Ixodes scapularis (Black-legged tick).